A 313-amino-acid chain; its full sequence is Probable alpha-L-glutamate ligase (313 aa).

Residues 112-294 (LQMLMAQGIA…IALQMIVHLE (183 aa)) enclose the ATP-grasp domain. ATP-binding positions include Lys-148, 185 to 186 (EF), Asp-194, and 218 to 220 (RAN). Positions 255, 267, and 269 each coordinate Mg(2+). Mn(2+) contacts are provided by Asp-255, Glu-267, and Asn-269.

This sequence belongs to the RimK family. It depends on Mg(2+) as a cofactor. The cofactor is Mn(2+).

This is Probable alpha-L-glutamate ligase from Pasteurella multocida (strain Pm70).